A 324-amino-acid polypeptide reads, in one-letter code: Probable UDP-sugar transporter protein SLC35A4 (324 aa).

The Cytoplasmic portion of the chain corresponds to 1 to 18; the sequence is MSVEDGGVPGLARPRQAR. The helical transmembrane segment at 19–39 threads the bilayer; sequence WTLLLFLSTAMYGAHAPFLAL. Topologically, residues 40–52 are lumenal; it reads CHVDGRVPFRPSS. Residues 53 to 73 traverse the membrane as a helical segment; that stretch reads AVLLTELTKLLLCAFSLLVGW. Topologically, residues 74–85 are cytoplasmic; it reads QTWPQGTPPWRQ. A helical membrane pass occupies residues 86–106; the sequence is AVPFALSALLYGANNNLVIYL. Residues 107–142 lie on the Lumenal side of the membrane; sequence QRYMDPSTYQVLSNLKIGSTALLYCLCLGHRLSARQ. A helical membrane pass occupies residues 143–163; that stretch reads GLALLLLMAAGACYASGGFQE. Over 164–180 the chain is Cytoplasmic; it reads PVNTLPGPASAAGAHPM. The helical transmembrane segment at 181–201 threads the bilayer; it reads PLHITPLGLLLLILYCLISGL. The Lumenal segment spans residues 202 to 214; it reads SSVYTELIMKRQR. Residues 215–235 form a helical membrane-spanning segment; it reads LPLALQNLFLYTFGVILNFGL. The Cytoplasmic portion of the chain corresponds to 236–248; the sequence is YAGSGPGPGFLEG. A helical membrane pass occupies residues 249-271; it reads FSGWAVLVVLNQAVNGLLMSAVM. The Lumenal portion of the chain corresponds to 272 to 279; the sequence is KHGSSITR. Residues 280–300 traverse the membrane as a helical segment; sequence LFIVSCSLVVNAVLSAVLLQL. Residues 301–324 are Cytoplasmic-facing; sequence QLTAIFFLAALLIGLAVCLYYGSP.

Belongs to the nucleotide-sugar transporter family. SLC35A subfamily. In terms of assembly, found in a complex with SLC35A2 and SLC35A3.

The protein resides in the golgi apparatus membrane. It carries out the reaction CDP-L-ribitol(in) + CDP(out) = CDP-L-ribitol(out) + CDP(in). Mediates the transport of CDP-ribitol. Does not exhibit CMP-sialic acid, UDP-galactose and UDP-N-acetylglucosamine transport activity. The sequence is that of Probable UDP-sugar transporter protein SLC35A4 from Mus musculus (Mouse).